A 584-amino-acid chain; its full sequence is Isocitrate dehydrogenase kinase/phosphatase (584 aa).

ATP is bound by residues 315–321 and K336; that span reads APGVKGM. The active site involves D371.

The protein belongs to the AceK family.

It localises to the cytoplasm. The catalysed reaction is L-seryl-[isocitrate dehydrogenase] + ATP = O-phospho-L-seryl-[isocitrate dehydrogenase] + ADP + H(+). Functionally, bifunctional enzyme which can phosphorylate or dephosphorylate isocitrate dehydrogenase (IDH) on a specific serine residue. This is a regulatory mechanism which enables bacteria to bypass the Krebs cycle via the glyoxylate shunt in response to the source of carbon. When bacteria are grown on glucose, IDH is fully active and unphosphorylated, but when grown on acetate or ethanol, the activity of IDH declines drastically concomitant with its phosphorylation. The polypeptide is Isocitrate dehydrogenase kinase/phosphatase (Serratia proteamaculans (strain 568)).